The primary structure comprises 333 residues: D-alanine--D-alanine ligase (333 aa).

Residues 124-329 enclose the ATP-grasp domain; the sequence is KMWFSALGIR…FAQYLSGNIM (206 aa). 154 to 209 serves as a coordination point for ATP; sequence ALEKWGSIFIKAASQGSSVGCYRVDNKEQLANSLEEAFKYSPYVVVEKTINARELE. Residues Asp-283, Glu-296, and Asn-298 each coordinate Mg(2+).

It belongs to the D-alanine--D-alanine ligase family. Mg(2+) serves as cofactor. Requires Mn(2+) as cofactor.

It is found in the cytoplasm. The catalysed reaction is 2 D-alanine + ATP = D-alanyl-D-alanine + ADP + phosphate + H(+). It participates in cell wall biogenesis; peptidoglycan biosynthesis. In terms of biological role, cell wall formation. In Shewanella halifaxensis (strain HAW-EB4), this protein is D-alanine--D-alanine ligase.